The following is a 61-amino-acid chain: Large ribosomal subunit protein bL28 (61 aa).

The interval 1–21 (MAKDYVTGKKTTFGNKRSHAM) is disordered.

The protein belongs to the bacterial ribosomal protein bL28 family.

The sequence is that of Large ribosomal subunit protein bL28 from Lactobacillus helveticus (strain DPC 4571).